The chain runs to 434 residues: 4-hydroxy-3-methylbut-2-en-1-yl diphosphate synthase (flavodoxin) (434 aa).

The span at M1–S15 shows a compositional bias: polar residues. The segment at M1–Q24 is disordered. Residues C322, C325, C368, and E375 each contribute to the [4Fe-4S] cluster site.

It belongs to the IspG family. The cofactor is [4Fe-4S] cluster.

The catalysed reaction is (2E)-4-hydroxy-3-methylbut-2-enyl diphosphate + oxidized [flavodoxin] + H2O + 2 H(+) = 2-C-methyl-D-erythritol 2,4-cyclic diphosphate + reduced [flavodoxin]. It participates in isoprenoid biosynthesis; isopentenyl diphosphate biosynthesis via DXP pathway; isopentenyl diphosphate from 1-deoxy-D-xylulose 5-phosphate: step 5/6. Its function is as follows. Converts 2C-methyl-D-erythritol 2,4-cyclodiphosphate (ME-2,4cPP) into 1-hydroxy-2-methyl-2-(E)-butenyl 4-diphosphate. This Burkholderia ambifaria (strain MC40-6) protein is 4-hydroxy-3-methylbut-2-en-1-yl diphosphate synthase (flavodoxin).